Here is a 284-residue protein sequence, read N- to C-terminus: 2-dehydro-3-deoxyphosphooctonate aldolase (284 aa).

The protein belongs to the KdsA family.

The protein localises to the cytoplasm. The enzyme catalyses D-arabinose 5-phosphate + phosphoenolpyruvate + H2O = 3-deoxy-alpha-D-manno-2-octulosonate-8-phosphate + phosphate. The protein operates within carbohydrate biosynthesis; 3-deoxy-D-manno-octulosonate biosynthesis; 3-deoxy-D-manno-octulosonate from D-ribulose 5-phosphate: step 2/3. Its pathway is bacterial outer membrane biogenesis; lipopolysaccharide biosynthesis. The protein is 2-dehydro-3-deoxyphosphooctonate aldolase of Shigella boydii serotype 18 (strain CDC 3083-94 / BS512).